The chain runs to 170 residues: Small ribosomal subunit protein uS9 (170 aa).

It belongs to the universal ribosomal protein uS9 family.

The polypeptide is Small ribosomal subunit protein uS9 (Rhodococcus opacus (strain B4)).